Reading from the N-terminus, the 368-residue chain is Endophilin-A2 (368 aa).

The membrane-binding amphipathic helix stretch occupies residues 1–21; the sequence is MSVAGLKKQFYKASQLVSEKV. The region spanning 18–249 is the BAR domain; that stretch reads SEKVGGAEGT…LKRRMREASS (232 aa). The interval 60–87 is required for dimerization upon membrane association; the sequence is PNPASRAKLTMLNTVSKIRGQVKNPGYP. Residues 181 to 250 adopt a coiled-coil conformation; it reads EELRQAMEKF…KRRMREASSR (70 aa). The segment at 218–254 is interaction with ARC; the sequence is LVDAQLDYHRQAVQILDELADKLKRRMREASSRPKRE. The interval 243–308 is disordered; that stretch reads RMREASSRPK…PSRSMPPLDQ (66 aa). Over residues 245–263 the composition is skewed to basic and acidic residues; that stretch reads REASSRPKREYKPKPRELL. Phosphoserine occurs at positions 288 and 292. At Thr298 the chain carries Phosphothreonine. One can recognise an SH3 domain in the interval 306-365; that stretch reads LDQPSCKALYDFEPENDGELGFHEGDIITLTNQIDENWYEGMLDGQSGFFPLSYVEVLVP. Tyr315 is modified (phosphotyrosine).

The protein belongs to the endophilin family. In terms of assembly, interacts with ARC, SYNJ1 and DNM1. Interacts with PDCD6IP. Interacts with BIN2.

The protein localises to the cytoplasm. It is found in the early endosome membrane. Its subcellular location is the cell projection. The protein resides in the podosome. Its function is as follows. Implicated in endocytosis. May recruit other proteins to membranes with high curvature. This Bos taurus (Bovine) protein is Endophilin-A2.